Consider the following 863-residue polypeptide: Receptor-like protein 9DC3 (863 aa).

The N-terminal stretch at 1–21 is a signal peptide; the sequence is MGCVKLVFFMLYVFLFQLVSS. The Extracellular portion of the chain corresponds to 22–812; sequence SSLPHLCPED…EEDSPMISWQ (791 aa). The N-cap stretch occupies residues 24–90; sequence LPHLCPEDQA…GVHCDETTGQ (67 aa). 2 N-linked (GlcNAc...) asparagine glycosylation sites follow: asparagine 71 and asparagine 108. One copy of the LRR 1; degenerate repeat lies at 91 to 114; the sequence is VIALDLRCSQLQGKFHSNSSLFQL. LRR repeat units lie at residues 115–138 and 140–163; these read SNLKRLDLSNNNFIGSLISPKFGE and SDLTHLDLSDSSFTGVIPSEISHL. Residues 164–190 form an LRR 4; degenerate repeat; sequence SKLHVLLIGDQYGLSIVPHNFEPLLKN. N-linked (GlcNAc...) asparagine glycans are attached at residues asparagine 190, asparagine 203, and asparagine 211. 6 LRR repeats span residues 191 to 213, 214 to 237, 240 to 262, 264 to 286, 287 to 311, and 312 to 336; these read LTQLRELNLYEVNLSSTVPSNFS, SHLTTLQLSGTGLRGLLPERVFHL, LEFLDLSYNSQLMVRFPTTKWNS, ASLMKLYVHSVNIADRIPESFSH, LTSLHELDMGYTNLSGPIPKPLWNL, and TNIESLDLRYNHLEGPIPQLPIFEK. Residue asparagine 261 is glycosylated (N-linked (GlcNAc...) asparagine). 2 N-linked (GlcNAc...) asparagine glycosylation sites follow: asparagine 299 and asparagine 310. The LRR 11; degenerate repeat unit spans residues 337-357; it reads LKKLSLFRNDNLDGGLEFLSF. LRR repeat units follow at residues 358–382, 383–406, 408–428, 429–452, 454–476, 477–500, 502–524, 525–549, 551–572, 573–597, 599–623, 667–690, 691–714, 715–739, and 741–759; these read NTQLERLDLSSNSLTGPIPSNISGL, QNLECLYLSSNHLNGSIPSWIFSL, SLVELDLSNNTFSGKIQEFKS, KTLSAVTLKQNKLKGRIPNSLLNQ, NLQLLLLSHNNISGHISSAICNL, KTLILLDLGSNNLEGTIPQCVVER, EYLSHLDLSKNRLSGTINTTFSV, GNILRVISLHGNKLTGKVPRSLINC, YLALLDLGNNQLNDTFPNWLGH, LSQLKILSLRSNKLHGPIKSSGNTN, FTRLQIMDLSYNGFSGNLPESILGN, LDSNMIINLSKNRFEGRIPSIIGD, LVGLRTLNLSHNVLEGHIPASFQN, LSVLESLDLSSNKISGEIPQQLASL, and FLEVLNLSHNHLVGCIPKG. 3 N-linked (GlcNAc...) asparagine glycosylation sites follow: asparagine 378, asparagine 396, and asparagine 416. The N-linked (GlcNAc...) asparagine glycan is linked to asparagine 464. An N-linked (GlcNAc...) asparagine glycan is attached at asparagine 519. N-linked (GlcNAc...) asparagine glycosylation is present at asparagine 563. Asparagine 674, asparagine 698, and asparagine 714 each carry an N-linked (GlcNAc...) asparagine glycan. 2 N-linked (GlcNAc...) asparagine glycosylation sites follow: asparagine 746 and asparagine 767. Positions 760-812 are C-cap/acidic domain; sequence KQFDSFGNTSYQGNDGLCGFPLSKLCGGDDQVTTPAELDQEEEEEDSPMISWQ. A helical membrane pass occupies residues 813-833; it reads GVLVGYGCGLVIGLSVIYIMW. Residues 834–863 are Cytoplasmic-facing; that stretch reads STQYPAWFSRMHLKLEQIVTTRMKKHKKRY.

Belongs to the RLP family.

The protein localises to the cell membrane. In terms of biological role, involved in plant defense. Confers resistance to the fungal pathogen C.fulvum through recognition of the AVR9 elicitor protein. The protein is Receptor-like protein 9DC3 of Solanum pimpinellifolium (Currant tomato).